The sequence spans 632 residues: tRNA uridine 5-carboxymethylaminomethyl modification enzyme MnmG (632 aa).

FAD contacts are provided by residues glycine 15–glycine 20, isoleucine 127, and serine 182. Glycine 276–phenylalanine 290 contacts NAD(+). Glutamine 373 contacts FAD.

This sequence belongs to the MnmG family. As to quaternary structure, homodimer. Heterotetramer of two MnmE and two MnmG subunits. Requires FAD as cofactor.

It is found in the cytoplasm. Its function is as follows. NAD-binding protein involved in the addition of a carboxymethylaminomethyl (cmnm) group at the wobble position (U34) of certain tRNAs, forming tRNA-cmnm(5)s(2)U34. This chain is tRNA uridine 5-carboxymethylaminomethyl modification enzyme MnmG, found in Streptococcus pyogenes serotype M4 (strain MGAS10750).